The chain runs to 482 residues: Cardiolipin synthase (482 aa).

A run of 2 helical transmembrane segments spans residues 4–24 (LAYL…VTVF) and 34–54 (WAWL…YLIF). PLD phosphodiesterase domains are found at residues 217 to 244 (LNYR…GDEY) and 395 to 422 (DNGF…DFRS). Catalysis depends on residues histidine 222, lysine 224, aspartate 229, histidine 400, lysine 402, and aspartate 407.

It belongs to the phospholipase D family. Cardiolipin synthase subfamily.

Its subcellular location is the cell membrane. The enzyme catalyses 2 a 1,2-diacyl-sn-glycero-3-phospho-(1'-sn-glycerol) = a cardiolipin + glycerol. Its function is as follows. Catalyzes the reversible phosphatidyl group transfer from one phosphatidylglycerol molecule to another to form cardiolipin (CL) (diphosphatidylglycerol) and glycerol. The chain is Cardiolipin synthase (cls) from Listeria welshimeri serovar 6b (strain ATCC 35897 / DSM 20650 / CCUG 15529 / CIP 8149 / NCTC 11857 / SLCC 5334 / V8).